Consider the following 471-residue polypeptide: Trigger factor (471 aa).

Positions 171 to 262 (GDLAIVDYAA…LKEIKFRELP (92 aa)) constitute a PPIase FKBP-type domain. The disordered stretch occupies residues 440-471 (PEGSLSQTEEDTPDDDAEEEAIVDVEATSDEE). The segment covering 447-471 (TEEDTPDDDAEEEAIVDVEATSDEE) has biased composition (acidic residues).

Belongs to the FKBP-type PPIase family. Tig subfamily.

The protein resides in the cytoplasm. It catalyses the reaction [protein]-peptidylproline (omega=180) = [protein]-peptidylproline (omega=0). Its function is as follows. Involved in protein export. Acts as a chaperone by maintaining the newly synthesized protein in an open conformation. Functions as a peptidyl-prolyl cis-trans isomerase. This is Trigger factor (tig) from Synechocystis sp. (strain ATCC 27184 / PCC 6803 / Kazusa).